A 285-amino-acid polypeptide reads, in one-letter code: 2,4-didehydro-3-deoxy-L-rhamnonate hydrolase (285 aa).

Leucine 73 is a binding site for pyruvate. The Mg(2+) site is built by glutamate 119, glutamate 121, and aspartate 150. Positions 168 and 238 each coordinate pyruvate.

Belongs to the FAH family. As to quaternary structure, homodimer. The cofactor is Mg(2+).

It catalyses the reaction 2,4-didehydro-3-deoxy-L-rhamnonate + H2O = (S)-lactate + pyruvate + H(+). Its pathway is carbohydrate degradation; L-rhamnose degradation. In terms of biological role, hydrolase that catalyzes the hydrolysis of 2,4-didehydro-3-deoxy-L-rhamnonate to pyruvate and L-lactate. Can also hydrolyze L-2,4-diketo-3-deoxylyxonate and L-2,4-diketo-3-deoxymannonate. In vitro can also use acylpyruvates such as acetylpyruvate and trimethylacetopyruvate. Catalyzes the fifth (last) step in an alternative pathway for rhamnose utilization that does not involve phosphorylated intermediates. This Sphingomonas sp. (strain SKA58) protein is 2,4-didehydro-3-deoxy-L-rhamnonate hydrolase.